The chain runs to 94 residues: Trp operon repressor homolog (94 aa).

Residues Q58–G81 mediate DNA binding.

The protein belongs to the TrpR family. As to quaternary structure, homodimer.

The protein localises to the cytoplasm. Functionally, this protein is an aporepressor. When complexed with L-tryptophan it binds the operator region of the trp operon and prevents the initiation of transcription. The protein is Trp operon repressor homolog of Chlamydia trachomatis serovar L2 (strain ATCC VR-902B / DSM 19102 / 434/Bu).